Reading from the N-terminus, the 530-residue chain is ATP synthase subunit alpha (530 aa).

An ATP-binding site is contributed by 169–176 (GDRQTGKT).

This sequence belongs to the ATPase alpha/beta chains family. In terms of assembly, F-type ATPases have 2 components, CF(1) - the catalytic core - and CF(0) - the membrane proton channel. CF(1) has five subunits: alpha(3), beta(3), gamma(1), delta(1), epsilon(1). CF(0) has three main subunits: a(1), b(2) and c(9-12). The alpha and beta chains form an alternating ring which encloses part of the gamma chain. CF(1) is attached to CF(0) by a central stalk formed by the gamma and epsilon chains, while a peripheral stalk is formed by the delta and b chains.

The protein localises to the cell membrane. It catalyses the reaction ATP + H2O + 4 H(+)(in) = ADP + phosphate + 5 H(+)(out). Functionally, produces ATP from ADP in the presence of a proton gradient across the membrane. The alpha chain is a regulatory subunit. The protein is ATP synthase subunit alpha of Mycoplasmopsis synoviae (strain 53) (Mycoplasma synoviae).